The following is a 2214-amino-acid chain: Genome polyprotein (2214 aa).

Disordered stretches follow at residues Met1–Gly21 and Lys600–Gln619. Gly2 is lipidated: N-myristoyl glycine; by host. Residues Gly2 to Gln1525 are Cytoplasmic-facing. 2 amphipathic alpha-helix regions span residues Gln580 to Pro601 and Gly581 to Pro601. Polar residues predominate over residues Thr606–Gln619. Residues His906 and Asp924 each act as for protease 2A activity in the active site. The Zn(2+) site is built by Cys941 and Cys943. The active-site For protease 2A activity is the Cys995. Zn(2+)-binding residues include Cys1001 and His1003. The segment at Gly1133 to Gln1205 is membrane-binding. Residues Gly1133–Thr1271 are oligomerization. An RNA-binding region spans residues Ser1154–Ser1158. The SF3 helicase domain maps to Glu1237–Asn1393. Gly1261 to Ser1268 is a binding site for ATP. 4 residues coordinate Zn(2+): Cys1401, Cys1404, Cys1413, and Cys1418. Residues Cys1401–Cys1418 form a C4-type zinc finger. The interval Glu1445–Ile1452 is RNA-binding. The oligomerization stretch occupies residues Met1456–Gln1461. Residues Ala1526 to Tyr1541 lie within the membrane without spanning it. Residues Lys1542–Phe2214 are Cytoplasmic-facing. Residue Tyr1551 is modified to O-(5'-phospho-RNA)-tyrosine. Residues Gly1571–Phe1749 enclose the Peptidase C3 domain. Catalysis depends on for protease 3C activity residues His1610, Glu1641, and Cys1717. The 116-residue stretch at Glu1980–Leu2095 folds into the RdRp catalytic domain. Positions 1986 and 2081 each coordinate Mg(2+).

Belongs to the picornaviruses polyprotein family. In terms of assembly, interacts with capsid protein VP1 and capsid protein VP3 to form heterotrimeric protomers. As to quaternary structure, interacts with capsid protein VP0, and capsid protein VP3 to form heterotrimeric protomers. Five protomers subsequently associate to form pentamers which serve as building blocks for the capsid. Interacts with capsid protein VP2, capsid protein VP3 and capsid protein VP4 following cleavage of capsid protein VP0. Interacts with capsid protein VP1 and capsid protein VP3 in the mature capsid. In terms of assembly, interacts with capsid protein VP0 and capsid protein VP1 to form heterotrimeric protomers. Five protomers subsequently associate to form pentamers which serve as building blocks for the capsid. Interacts with capsid protein VP4 in the mature capsid. Interacts with protein 2C; this interaction may be important for virion morphogenesis. As to quaternary structure, interacts with capsid protein VP1 and capsid protein VP3. Homodimer. In terms of assembly, homohexamer; forms a hexameric ring structure with 6-fold symmetry characteristic of AAA+ ATPases. Interacts (via N-terminus) with host RTN3 (via reticulon domain); this interaction is important for viral replication. Interacts with capsid protein VP3; this interaction may be important for virion morphogenesis. As to quaternary structure, interacts with protein 3CD. Homodimer. Interacts with host GBF1. Interacts (via GOLD domain) with host ACBD3 (via GOLD domain); this interaction allows the formation of a viral protein 3A/ACBD3 heterotetramer with a 2:2 stoichiometry, which will stimulate the recruitment of host PI4KB in order to synthesize PI4P at the viral RNA replication sites. In terms of assembly, interacts with RNA-directed RNA polymerase. As to quaternary structure, interacts with protein 3AB and with RNA-directed RNA polymerase. Interacts with Viral protein genome-linked and with protein 3CD. Requires Mg(2+) as cofactor. In terms of processing, specific enzymatic cleavages in vivo by the viral proteases yield processing intermediates and the mature proteins. Post-translationally, myristoylation is required for the formation of pentamers during virus assembly. Further assembly of 12 pentamers and a molecule of genomic RNA generates the provirion. During virion maturation, immature virions are rendered infectious following cleavage of VP0 into VP4 and VP2. This maturation seems to be an autocatalytic event triggered by the presence of RNA in the capsid and it is followed by a conformational change infectious virion. In terms of processing, myristoylation is required during RNA encapsidation and formation of the mature virus particle. Post-translationally, VPg is uridylylated by the polymerase into VPg-pUpU. This acts as a nucleotide-peptide primer for the genomic RNA replication.

Its subcellular location is the virion. It is found in the host cytoplasm. The protein localises to the host cytoplasmic vesicle membrane. The protein resides in the host nucleus. It catalyses the reaction a ribonucleoside 5'-triphosphate + H2O = a ribonucleoside 5'-diphosphate + phosphate + H(+). It carries out the reaction Selective cleavage of Tyr-|-Gly bond in the picornavirus polyprotein.. The enzyme catalyses RNA(n) + a ribonucleoside 5'-triphosphate = RNA(n+1) + diphosphate. The catalysed reaction is Selective cleavage of Gln-|-Gly bond in the poliovirus polyprotein. In other picornavirus reactions Glu may be substituted for Gln, and Ser or Thr for Gly.. Replication or transcription is subject to high level of random mutations by the nucleotide analog ribavirin. Functionally, forms an icosahedral capsid of pseudo T=3 symmetry with capsid proteins VP2 and VP3. The capsid is 300 Angstroms in diameter, composed of 60 copies of each capsid protein and enclosing the viral positive strand RNA genome. Capsid protein VP1 mainly forms the vertices of the capsid. Capsid protein VP1 interacts with host cell receptor to provide virion attachment to target host cells. This attachment induces virion internalization. Tyrosine kinases are probably involved in the entry process. After binding to its receptor, the capsid undergoes conformational changes. Capsid protein VP1 N-terminus (that contains an amphipathic alpha-helix) and capsid protein VP4 are externalized. Together, they shape a pore in the host membrane through which viral genome is translocated to host cell cytoplasm. Its function is as follows. Forms an icosahedral capsid of pseudo T=3 symmetry with capsid proteins VP2 and VP3. The capsid is 300 Angstroms in diameter, composed of 60 copies of each capsid protein and enclosing the viral positive strand RNA genome. Lies on the inner surface of the capsid shell. After binding to the host receptor, the capsid undergoes conformational changes. Capsid protein VP4 is released, Capsid protein VP1 N-terminus is externalized, and together, they shape a pore in the host membrane through which the viral genome is translocated into the host cell cytoplasm. In terms of biological role, component of immature procapsids, which is cleaved into capsid proteins VP4 and VP2 after maturation. Allows the capsid to remain inactive before the maturation step. Functionally, cysteine protease that cleaves viral polyprotein and specific host proteins. It is responsible for the autocatalytic cleavage between the P1 and P2 regions, which is the first cleavage occurring in the polyprotein. Also cleaves the host translation initiation factor EIF4G1, in order to shut down the capped cellular mRNA translation. Inhibits the host nucleus-cytoplasm protein and RNA trafficking by cleaving host members of the nuclear pores. Counteracts stress granule formation probably by antagonizing its assembly or promoting its dissassembly. Cleaves and inhibits host IFIH1/MDA5, thereby inhibiting the type-I IFN production and the establishment of the antiviral state. Cleaves and inhibits host MAVS, thereby inhibiting the type-I IFN production and the establishment of the antiviral state. Its function is as follows. Plays an essential role in the virus replication cycle by acting as a viroporin. Creates a pore in the host endoplasmic reticulum and as a consequence releases Ca2+ in the cytoplasm of infected cell. In turn, high levels of cytoplasmic calcium may trigger membrane trafficking and transport of viral ER-associated proteins to viroplasms, sites of viral genome replication. Induces and associates with structural rearrangements of intracellular membranes. Displays RNA-binding, nucleotide binding and NTPase activities. May play a role in virion morphogenesis and viral RNA encapsidation by interacting with the capsid protein VP3. In terms of biological role, localizes the viral replication complex to the surface of membranous vesicles. Together with protein 3CD binds the Cis-Active RNA Element (CRE) which is involved in RNA synthesis initiation. Acts as a cofactor to stimulate the activity of 3D polymerase, maybe through a nucleid acid chaperone activity. Functionally, localizes the viral replication complex to the surface of membranous vesicles. It inhibits host cell endoplasmic reticulum-to-Golgi apparatus transport and causes the disassembly of the Golgi complex, possibly through GBF1 interaction. This would result in depletion of MHC, trail receptors and IFN receptors at the host cell surface. Plays an essential role in viral RNA replication by recruiting ACBD3 and PI4KB at the viral replication sites, thereby allowing the formation of the rearranged membranous structures where viral replication takes place. Its function is as follows. Acts as a primer for viral RNA replication and remains covalently bound to viral genomic RNA. VPg is uridylylated prior to priming replication into VPg-pUpU. The oriI viral genomic sequence may act as a template for this. The VPg-pUpU is then used as primer on the genomic RNA poly(A) by the RNA-dependent RNA polymerase to replicate the viral genome. During genome replication, the VPg-RNA linkage is removed by the host TDP2, thereby accelerating replication. During the late stage of the replication cycle, host TDP2 is excluded from sites of viral RNA synthesis and encapsidation, allowing for the generation of progeny virions. Involved in the viral replication complex and viral polypeptide maturation. It exhibits protease activity with a specificity and catalytic efficiency that is different from protease 3C. Protein 3CD lacks polymerase activity. Protein 3CD binds to the 5'UTR of the viral genome. In terms of biological role, replicates the viral genomic RNA on the surface of intracellular membranes. May form linear arrays of subunits that propagate along a strong head-to-tail interaction called interface-I. Covalently attaches UMP to a tyrosine of VPg, which is used to prime RNA synthesis. The positive stranded RNA genome is first replicated at virus induced membranous vesicles, creating a dsRNA genomic replication form. This dsRNA is then used as template to synthesize positive stranded RNA genomes. ss(+)RNA genomes are either translated, replicated or encapsidated. Functionally, major viral protease that mediates proteolytic processing of the polyprotein. Cleaves host EIF5B, contributing to host translation shutoff. Also cleaves host PABPC1, contributing to host translation shutoff. Cleaves host NLRP1, triggers host N-glycine-mediated degradation of the autoinhibitory NLRP1 N-terminal fragment. This is Genome polyprotein from Coxsackievirus A24 (strain EH24/70).